Reading from the N-terminus, the 515-residue chain is Putative ribose/galactose/methyl galactoside import ATP-binding protein (515 aa).

ABC transporter domains follow at residues 25–261 (LEVL…VGRE) and 268–515 (LREK…SGLN). 57–64 (GENGAGKS) serves as a coordination point for ATP.

The protein belongs to the ABC transporter superfamily. Carbohydrate importer 2 (CUT2) (TC 3.A.1.2) family.

Its subcellular location is the cell inner membrane. It catalyses the reaction D-ribose(out) + ATP + H2O = D-ribose(in) + ADP + phosphate + H(+). The catalysed reaction is D-galactose(out) + ATP + H2O = D-galactose(in) + ADP + phosphate + H(+). Part of an ABC transporter complex involved in carbohydrate import. Could be involved in ribose, galactose and/or methyl galactoside import. Responsible for energy coupling to the transport system. The chain is Putative ribose/galactose/methyl galactoside import ATP-binding protein from Pseudomonas fluorescens (strain ATCC BAA-477 / NRRL B-23932 / Pf-5).